A 1169-amino-acid chain; its full sequence is Integrin alpha-X (1169 aa).

A signal peptide spans 1–19 (MSCTWIAFLLLLGFVSCLG). The Extracellular segment spans residues 20–1116 (FNLDAEKLTH…EMYKVHNPVP (1097 aa)). 2 FG-GAP repeats span residues 23–78 (DAEK…NCEP) and 79–138 (ISLQ…QSQN). C69 and C76 form a disulfide bridge. N89 carries an N-linked (GlcNAc...) asparagine glycan. Cystine bridges form between C108/C126 and C116/C146. A VWFA domain is found at 152 to 330 (DIVFLIDGSG…DALKDIENQL (179 aa)). The Mg(2+) site is built by D158, S160, S162, and D260. N267 carries N-linked (GlcNAc...) asparagine glycosylation. FG-GAP repeat units follow at residues 341–392 (ETPS…PTFI), 393–444 (NMSQ…SRHW), 445–505 (RPKS…GSRW), 508–566 (GTTL…QDIA), and 571–631 (QRIS…FTPA). N393 carries an N-linked (GlcNAc...) asparagine glycan. Ca(2+)-binding residues include D467, D469, D471, and D475. The cysteines at positions 496 and 507 are disulfide-linked. Positions 531, 533, 535, 539, 594, 598, and 602 each coordinate Ca(2+). Disulfide bonds link C640/C721 and C656/C711. N-linked (GlcNAc...) asparagine glycosylation occurs at N734. Intrachain disulfides connect C770–C776 and C858–C873. N949 carries N-linked (GlcNAc...) asparagine glycosylation. Intrachain disulfides connect C1007/C1031 and C1036/C1041. N-linked (GlcNAc...) asparagine glycans are attached at residues N1059 and N1084. A helical membrane pass occupies residues 1117 to 1137 (LIVGSSVGGLLLLAIITAILY). The Cytoplasmic segment spans residues 1138 to 1169 (KAGFFKRQYKEMLEEANGQFVSDGTPTPQVAQ). A GFFKR motif motif is present at residues 1140-1144 (GFFKR).

Belongs to the integrin alpha chain family. Heterodimer of an alpha and a beta subunit. Alpha-X associates with beta-2.

The protein localises to the membrane. Integrin alpha-X/beta-2 is a receptor for fibrinogen. It recognizes the sequence G-P-R in fibrinogen. It mediates cell-cell interaction during inflammatory responses. It is especially important in monocyte adhesion and chemotaxis. The polypeptide is Integrin alpha-X (Itgax) (Mus musculus (Mouse)).